We begin with the raw amino-acid sequence, 452 residues long: Bifunctional protein GlmU (452 aa).

Residues 1–226 form a pyrophosphorylase region; it reads MSLAVVILAA…GWEVDGVNDR (226 aa). UDP-N-acetyl-alpha-D-glucosamine is bound by residues 8-11, Lys22, Gln73, 78-79, 99-101, Gly136, Glu151, Asn166, and Asn224; these read LAAG, GT, and YGD. Asp101 serves as a coordination point for Mg(2+). Mg(2+) is bound at residue Asn224. Positions 227 to 247 are linker; sequence VQLARLERIYQQAQAETLMRD. The segment at 248–452 is N-acetyltransferase; it reads GVTLLDPSRL…VANWQRPKKG (205 aa). Positions 330 and 348 each coordinate UDP-N-acetyl-alpha-D-glucosamine. His360 serves as the catalytic Proton acceptor. UDP-N-acetyl-alpha-D-glucosamine is bound by residues Tyr363 and Asn374. Acetyl-CoA contacts are provided by residues Ala377, 383-384, Ser402, Ala420, and Arg437; that span reads NY.

In the N-terminal section; belongs to the N-acetylglucosamine-1-phosphate uridyltransferase family. This sequence in the C-terminal section; belongs to the transferase hexapeptide repeat family. In terms of assembly, homotrimer. It depends on Mg(2+) as a cofactor.

Its subcellular location is the cytoplasm. The enzyme catalyses alpha-D-glucosamine 1-phosphate + acetyl-CoA = N-acetyl-alpha-D-glucosamine 1-phosphate + CoA + H(+). It catalyses the reaction N-acetyl-alpha-D-glucosamine 1-phosphate + UTP + H(+) = UDP-N-acetyl-alpha-D-glucosamine + diphosphate. The protein operates within nucleotide-sugar biosynthesis; UDP-N-acetyl-alpha-D-glucosamine biosynthesis; N-acetyl-alpha-D-glucosamine 1-phosphate from alpha-D-glucosamine 6-phosphate (route II): step 2/2. Its pathway is nucleotide-sugar biosynthesis; UDP-N-acetyl-alpha-D-glucosamine biosynthesis; UDP-N-acetyl-alpha-D-glucosamine from N-acetyl-alpha-D-glucosamine 1-phosphate: step 1/1. It functions in the pathway bacterial outer membrane biogenesis; LPS lipid A biosynthesis. Catalyzes the last two sequential reactions in the de novo biosynthetic pathway for UDP-N-acetylglucosamine (UDP-GlcNAc). The C-terminal domain catalyzes the transfer of acetyl group from acetyl coenzyme A to glucosamine-1-phosphate (GlcN-1-P) to produce N-acetylglucosamine-1-phosphate (GlcNAc-1-P), which is converted into UDP-GlcNAc by the transfer of uridine 5-monophosphate (from uridine 5-triphosphate), a reaction catalyzed by the N-terminal domain. The sequence is that of Bifunctional protein GlmU from Alcanivorax borkumensis (strain ATCC 700651 / DSM 11573 / NCIMB 13689 / SK2).